Consider the following 1072-residue polypeptide: Zn(2)-C6 fungal-type transcription factor FTF2 (1072 aa).

Positions 179 to 206 form a DNA-binding region, zn(2)-C6 fungal-type; the sequence is CIACRRKKIRCSGEKPACKHCLRSRIPC.

The protein resides in the nucleus. Its function is as follows. Zn(2)-C6 fungal-type transcription factor that has a role in conidia production and also in plant colonization. Acts as a negative regulator of the production of macroconidia and is required for full virulence and the positive regulation of SIX effectors. In addition, FTF2 is also involved in the regulation of class II hydrophobins FOXG_02746 and FOXG_02748 likely required for plant colonization. In Fusarium oxysporum f. sp. lycopersici (strain 4287 / CBS 123668 / FGSC 9935 / NRRL 34936) (Fusarium vascular wilt of tomato), this protein is Zn(2)-C6 fungal-type transcription factor FTF2.